Here is a 190-residue protein sequence, read N- to C-terminus: dCTP deaminase, dUMP-forming (190 aa).

DCTP-binding positions include 101–106, D119, 127–129, Q148, Y162, and Q174; these read KSSLGR and TLE. Catalysis depends on E129, which acts as the Proton donor/acceptor. The disordered stretch occupies residues 161-190; sequence PYGSSSVGSKYQGQRGPTPSRSYQNFVKND. Positions 163–190 are enriched in polar residues; it reads GSSSVGSKYQGQRGPTPSRSYQNFVKND.

Belongs to the dCTP deaminase family. As to quaternary structure, homotrimer.

It carries out the reaction dCTP + 2 H2O = dUMP + NH4(+) + diphosphate. Its pathway is pyrimidine metabolism; dUMP biosynthesis; dUMP from dCTP: step 1/1. Functionally, bifunctional enzyme that catalyzes both the deamination of dCTP to dUTP and the hydrolysis of dUTP to dUMP without releasing the toxic dUTP intermediate. This chain is dCTP deaminase, dUMP-forming, found in Mycolicibacterium vanbaalenii (strain DSM 7251 / JCM 13017 / BCRC 16820 / KCTC 9966 / NRRL B-24157 / PYR-1) (Mycobacterium vanbaalenii).